The primary structure comprises 500 residues: Probable cytosol aminopeptidase (500 aa).

Residues K264 and D269 each contribute to the Mn(2+) site. Residue K276 is part of the active site. D287, D346, and E348 together coordinate Mn(2+). R350 is an active-site residue.

Belongs to the peptidase M17 family. The cofactor is Mn(2+).

The protein resides in the cytoplasm. The catalysed reaction is Release of an N-terminal amino acid, Xaa-|-Yaa-, in which Xaa is preferably Leu, but may be other amino acids including Pro although not Arg or Lys, and Yaa may be Pro. Amino acid amides and methyl esters are also readily hydrolyzed, but rates on arylamides are exceedingly low.. It catalyses the reaction Release of an N-terminal amino acid, preferentially leucine, but not glutamic or aspartic acids.. In terms of biological role, presumably involved in the processing and regular turnover of intracellular proteins. Catalyzes the removal of unsubstituted N-terminal amino acids from various peptides. The polypeptide is Probable cytosol aminopeptidase (Chlamydia abortus (strain DSM 27085 / S26/3) (Chlamydophila abortus)).